The following is a 586-amino-acid chain: CTP synthase 2 (586 aa).

One can recognise a Glutamine amidotransferase type-1 domain in the interval 300-554; it reads SIALVGKYTK…LAATGNLNAY (255 aa). Active-site for GATase activity residues include Cys-399, His-526, and Glu-528. Residues 564 to 586 form a disordered region; sequence SDRYSDASDDSFSEPRLAELEIS. Phosphoserine is present on residues Ser-568, Ser-571, and Ser-574.

The protein belongs to the CTP synthase family.

The catalysed reaction is UTP + L-glutamine + ATP + H2O = CTP + L-glutamate + ADP + phosphate + 2 H(+). It functions in the pathway pyrimidine metabolism; CTP biosynthesis via de novo pathway; CTP from UDP: step 2/2. In terms of biological role, catalyzes the ATP-dependent amination of UTP to CTP with either L-glutamine or ammonia as the source of nitrogen. Constitutes the rate-limiting enzyme in the synthesis of cytosine nucleotides. This is CTP synthase 2 (CTPS2) from Bos taurus (Bovine).